The following is a 198-amino-acid chain: Secreted RxLR effector protein PITG_22926 (198 aa).

A signal peptide spans 1–20; that stretch reads MLRSFLLIVATVSLFGQCKP. A RxLR-dEER motif is present at residues 43–52; the sequence is RFLRTNDEER.

This sequence belongs to the RxLR effector family. In terms of assembly, interacts with host MAP3Kbeta2 in the nucleoplasm.

The protein localises to the secreted. The protein resides in the host nucleus. It localises to the host nucleolus. Secreted effector that promotes P.infestans colonization of plant host. Specifically suppresses Avr4/Cf4- and AvrPto/Pto-triggered cell death. Targets the potato MAP3Kbeta2 kinase, a positive regulator of cell death associated with plant immunity, and perturbs signaling pathways triggered by MAP3Kbeta2. In Phytophthora infestans (strain T30-4) (Potato late blight agent), this protein is Secreted RxLR effector protein PITG_22926.